We begin with the raw amino-acid sequence, 344 residues long: Gibberellin receptor GID1C (344 aa).

Ala-2 carries the post-translational modification N-acetylalanine. An Involved in the stabilization of the negatively charged intermediate by the formation of the oxyanion hole motif is present at residues 111 to 113 (HGG). Residues 113-114 (GS), Tyr-125, and Ser-189 contribute to the gibberellin A4 site. Positions 114, 125, 189, and 236 each coordinate gibberellin A3. Ser-189 is an active-site residue. Residue Asp-287 is part of the active site. Gly-318 contributes to the gibberellin A4 binding site. Gly-318 lines the gibberellin A3 pocket.

It belongs to the 'GDXG' lipolytic enzyme family. In terms of assembly, interacts with the DELLA proteins GAI, RGA, RGL1, RGL2 and RGL3 in a GA-dependent manner. Widely expressed.

The protein localises to the nucleus. In terms of biological role, functions as a soluble gibberellin (GA) receptor. GA is an essential hormone that regulates growth and development in plants. Binds with high affinity the biologically active gibberellin GA4, but has no affinity for the biologically inactive GAs. In response to GA, interacts with specific DELLA proteins, known as repressors of GA-induced growth, and targets them for degradation via proteasome. Seems to be required for GA signaling that controls root growth, seed germination and stem elongation. Partially redundant with GID1A and GID1B. This Arabidopsis thaliana (Mouse-ear cress) protein is Gibberellin receptor GID1C (GID1C).